A 441-amino-acid chain; its full sequence is L-seryl-tRNA(Sec) selenium transferase (441 aa).

Position 283 is an N6-(pyridoxal phosphate)lysine (Lys283).

The protein belongs to the SelA family. Pyridoxal 5'-phosphate serves as cofactor.

It is found in the cytoplasm. It carries out the reaction L-seryl-tRNA(Sec) + selenophosphate + H(+) = L-selenocysteinyl-tRNA(Sec) + phosphate. It functions in the pathway aminoacyl-tRNA biosynthesis; selenocysteinyl-tRNA(Sec) biosynthesis; selenocysteinyl-tRNA(Sec) from L-seryl-tRNA(Sec) (bacterial route): step 1/1. In terms of biological role, converts seryl-tRNA(Sec) to selenocysteinyl-tRNA(Sec) required for selenoprotein biosynthesis. The protein is L-seryl-tRNA(Sec) selenium transferase of Campylobacter concisus (strain 13826).